A 204-amino-acid chain; its full sequence is Large ribosomal subunit protein mL67 (204 aa).

The protein belongs to the mitochondrion-specific ribosomal protein mL67 family.

The protein resides in the nucleus. Its subcellular location is the mitochondrion. Functionally, transcription factor involved in regulation of RNA polymerase II-dependent transcription. Also involved in regulation of mitochondrial DNA recombination, maintenance and repair, and generation of homoplasmic cells. The chain is Large ribosomal subunit protein mL67 (MHR1) from Yarrowia lipolytica (strain CLIB 122 / E 150) (Yeast).